We begin with the raw amino-acid sequence, 81 residues long: Putative defensin-like protein 26 (81 aa).

Positions 1 to 21 (MASLKVFSFALLIVLTFSVIG) are cleaved as a signal peptide. 2 cysteine pairs are disulfide-bonded: Cys-33/Cys-81 and Cys-52/Cys-77.

Belongs to the DEFL family.

The protein localises to the secreted. This Arabidopsis thaliana (Mouse-ear cress) protein is Putative defensin-like protein 26.